Reading from the N-terminus, the 269-residue chain is Trans-aconitate 2-methyltransferase (269 aa).

Belongs to the methyltransferase superfamily. Tam family.

The protein resides in the cytoplasm. It carries out the reaction trans-aconitate + S-adenosyl-L-methionine = (E)-3-(methoxycarbonyl)pent-2-enedioate + S-adenosyl-L-homocysteine. Catalyzes the S-adenosylmethionine monomethyl esterification of trans-aconitate. This is Trans-aconitate 2-methyltransferase from Streptomyces avermitilis (strain ATCC 31267 / DSM 46492 / JCM 5070 / NBRC 14893 / NCIMB 12804 / NRRL 8165 / MA-4680).